The primary structure comprises 720 residues: MNNHVSSKPSTMKLKHTINPILLYFIHFLISLYTILTYIPFYFFSESRQEKSNRIKAKPVNSKPDSAYRSVNSLDGLASVLYPGCDTLDKVFTYAKNKFKNKRLLGTREVLNEEDEVQPNGKIFKKVILGQYNWLSYEDVFVRAFNFGNGLQMLGQKPKTNIAIFCETRAEWMIAAQACFMYNFQLVTLYATLGGPAIVHALNETEVTNIITSKELLQTKLKDIVSLVPRLRHIITVDGKPPTWSEFPKGIIVHTMAAVEALGAKASMENQPHSKPLPSDIAVIMYTSGSTGLPKGVMISHSNIIAGITGMAERIPELGEEDVYIGYLPLAHVLELSAELVCLSHGCRIGYSSPQTLADQSSKIKKGSKGDTSMLKPTLMAAVPEIMDRIYKNVMNKVSEMSSFQRNLFILAYNYKMEQISKGRNTPLCDSFVFRKVRSLLGGNIRLLLCGGAPLSATTQRFMNICFCCPVGQGYGLTESAGAGTISEVWDYNTGRVGAPLVCCEIKLKNWEEGGYFNTDKPHPRGEILIGGQSVTMGYYKNEAKTKADFFEDENGQRWLCTGDIGEFEPDGCLKIIDRKKDLVKLQAGEYVSLGKVEAALKNLPLVDNICAYANSYHSYVIGFVVPNQKELTELARKKGLKGTWEELCNSCEMENEVLKVLSEAAISASLEKFEIPVKIRLSPEPWTPETGLVTDAFKLKRKELKTHYQADIERMYGRK.

Residues 21–41 (ILLYFIHFLISLYTILTYIPF) traverse the membrane as a helical; Signal-anchor for type III membrane protein segment. Over 42–720 (YFFSESRQEK…ADIERMYGRK (679 aa)) the chain is Cytoplasmic. Phosphoserine is present on serine 683.

This sequence belongs to the ATP-dependent AMP-binding enzyme family. Requires Mg(2+) as cofactor.

The protein resides in the mitochondrion outer membrane. Its subcellular location is the peroxisome membrane. It localises to the microsome membrane. The protein localises to the endoplasmic reticulum membrane. The catalysed reaction is a long-chain fatty acid + ATP + CoA = a long-chain fatty acyl-CoA + AMP + diphosphate. The enzyme catalyses (5Z,8Z,11Z,14Z)-eicosatetraenoate + ATP + CoA = (5Z,8Z,11Z,14Z)-eicosatetraenoyl-CoA + AMP + diphosphate. It catalyses the reaction (E)-hexadec-2-enoate + ATP + CoA = (2E)-hexadecenoyl-CoA + AMP + diphosphate. It carries out the reaction 15-hydroxy-(5Z,8Z,11Z,13E)-eicosatetraenoate + ATP + CoA = 15-hydroxy-(5Z,8Z,11Z,13E)-eicosatetraenoyl-CoA + AMP + diphosphate. The catalysed reaction is 12-hydroxy-(5Z,8Z,10E,14Z)-eicosatetraenoate + ATP + CoA = 12-hydroxy-(5Z,8Z,10E,14Z)-eicosatetraenoyl-CoA + AMP + diphosphate. The enzyme catalyses 5-hydroxy-(6E,8Z,11Z,14Z)-eicosatetraenoate + ATP + CoA = 5-hydroxy-(6E,8Z,11Z,14Z)-eicosatetraenoyl-CoA + AMP + diphosphate. It catalyses the reaction 14,15-epoxy-(5Z,8Z,11Z)-eicosatrienoate + ATP + CoA = 14,15-epoxy-(5Z,8Z,11Z)-eicosatrienoyl-CoA + AMP + diphosphate. It carries out the reaction 11,12-epoxy-(5Z,8Z,14Z)-eicosatrienoate + ATP + CoA = 11,12-epoxy-(5Z,8Z,14Z)-eicosatrienoyl-CoA + AMP + diphosphate. The catalysed reaction is a medium-chain fatty acid + ATP + CoA = a medium-chain fatty acyl-CoA + AMP + diphosphate. The enzyme catalyses hexadecanoate + ATP + CoA = hexadecanoyl-CoA + AMP + diphosphate. It catalyses the reaction tetradecanoate + ATP + CoA = tetradecanoyl-CoA + AMP + diphosphate. It carries out the reaction dodecanoate + ATP + CoA = dodecanoyl-CoA + AMP + diphosphate. The catalysed reaction is octadecanoate + ATP + CoA = octadecanoyl-CoA + AMP + diphosphate. The enzyme catalyses eicosanoate + ATP + CoA = eicosanoyl-CoA + AMP + diphosphate. It catalyses the reaction (9Z)-octadecenoate + ATP + CoA = (9Z)-octadecenoyl-CoA + AMP + diphosphate. It carries out the reaction (9Z)-hexadecenoate + ATP + CoA = (9Z)-hexadecenoyl-CoA + AMP + diphosphate. The catalysed reaction is (9Z,12Z)-octadecadienoate + ATP + CoA = (9Z,12Z)-octadecadienoyl-CoA + AMP + diphosphate. The enzyme catalyses (9Z,12Z,15Z)-octadecatrienoate + ATP + CoA = (9Z,12Z,15Z)-octadecatrienoyl-CoA + AMP + diphosphate. It catalyses the reaction (4Z,7Z,10Z,13Z,16Z,19Z)-docosahexaenoate + ATP + CoA = (4Z,7Z,10Z,13Z,16Z,19Z)-docosahexaenoyl-CoA + AMP + diphosphate. It carries out the reaction (5Z,8Z,11Z,14Z,17Z)-eicosapentaenoate + ATP + CoA = (5Z,8Z,11Z,14Z,17Z)-eicosapentaenoyl-CoA + AMP + diphosphate. The catalysed reaction is a fatty acid + ATP + CoA = a fatty acyl-CoA + AMP + diphosphate. Acyl-CoA synthetases (ACSL) activates long-chain fatty acids for both synthesis of cellular lipids, and degradation via beta-oxidation. Required for the incorporation of fatty acids into phosphatidylcholine, the major phospholipid located on the surface of VLDL (very low density lipoproteins). Has mainly an anabolic role in energy metabolism. Mediates hepatic lipogenesis. Preferentially uses myristate, laurate, arachidonate and eicosapentaenoate as substrates. Both isoforms exhibit the same level of activity. The polypeptide is Fatty acid CoA ligase Acsl3 (Homo sapiens (Human)).